Reading from the N-terminus, the 263-residue chain is Undecaprenyl-diphosphatase (263 aa).

Transmembrane regions (helical) follow at residues 40-60, 87-107, 109-129, 186-206, 219-239, and 243-263; these read PGVLFDVLLHAGTMAAVLVYF, LLIIATVPTAIIGLSFKDFFV, AFHNLPLISLMLVVTGGLLFF, FSFLMALPAVFGATLVSLLEW, AGAVMAFLSGLASIHLLMGVV, and RLYAFAVYCWLMGGMFFAISS.

This sequence belongs to the UppP family.

It is found in the cell inner membrane. The catalysed reaction is di-trans,octa-cis-undecaprenyl diphosphate + H2O = di-trans,octa-cis-undecaprenyl phosphate + phosphate + H(+). Its function is as follows. Catalyzes the dephosphorylation of undecaprenyl diphosphate (UPP). Confers resistance to bacitracin. This is Undecaprenyl-diphosphatase from Syntrophotalea carbinolica (strain DSM 2380 / NBRC 103641 / GraBd1) (Pelobacter carbinolicus).